Here is a 365-residue protein sequence, read N- to C-terminus: Elongation factor Tu (365 aa).

GTP-binding positions include 1–7 (HVDHGKT), 62–66 (DCPGH), and 117–120 (NKCD). Positions 1-185 (HVDHGKTTLT…TLDSYIPTPE (185 aa)) constitute a tr-type G domain. T7 provides a ligand contact to Mg(2+).

The protein belongs to the TRAFAC class translation factor GTPase superfamily. Classic translation factor GTPase family. EF-Tu/EF-1A subfamily. As to quaternary structure, monomer.

It localises to the cytoplasm. It catalyses the reaction GTP + H2O = GDP + phosphate + H(+). GTP hydrolase that promotes the GTP-dependent binding of aminoacyl-tRNA to the A-site of ribosomes during protein biosynthesis. This is Elongation factor Tu from Buchnera aphidicola subsp. Schlechtendalia chinensis.